Here is a 364-residue protein sequence, read N- to C-terminus: N-alpha-acetyltransferase 30 (364 aa).

A compositionally biased stretch (pro residues) spans Met1–Ala18. 3 disordered regions span residues Met1–Ala21, Ser39–Lys65, and Glu110–Ala164. A phosphoserine mark is found at Ser39 and Ser54. The segment covering Ser39–His48 has biased composition (acidic residues). Over residues Ala126–Pro135 the composition is skewed to basic and acidic residues. The span at Ala152–Ala164 shows a compositional bias: low complexity. Phosphoserine occurs at positions 192, 198, and 201. The N-acetyltransferase domain occupies Arg216–Arg364. Residue Lys235 is modified to N6-acetyllysine.

Belongs to the acetyltransferase family. MAK3 subfamily. Component of the N-terminal acetyltransferase C (NatC) complex, which is composed of NAA35, NAA38 and NAA30.

It is found in the cytoplasm. Its subcellular location is the nucleus. The enzyme catalyses N-terminal L-methionyl-L-leucyl-[protein] + acetyl-CoA = N-terminal N(alpha)-acetyl-L-methionyl-L-leucyl-[protein] + CoA + H(+). The catalysed reaction is N-terminal L-methionyl-L-isoleucyl-[protein] + acetyl-CoA = N-terminal N(alpha)-acetyl-L-methionyl-L-isoleucyl-[protein] + CoA + H(+). It carries out the reaction N-terminal L-methionyl-L-phenylalanyl-[protein] + acetyl-CoA = N-terminal N(alpha)-acetyl-L-methionyl-L-phenylalanyl-[protein] + CoA + H(+). It catalyses the reaction N-terminal L-methionyl-L-tryptophyl-[protein] + acetyl-CoA = N-terminal N(alpha)-acetyl-L-methionyl-L-tryptophyl-[protein] + CoA + H(+). The enzyme catalyses N-terminal L-methionyl-L-tyrosyl-[protein] + acetyl-CoA = N-terminal N(alpha)-acetyl-L-methionyl-L-tyrosyl-[protein] + CoA + H(+). Catalytic subunit of the N-terminal acetyltransferase C (NatC) complex. Catalyzes acetylation of the N-terminal methionine residues of peptides beginning with Met-Leu-Ala and Met-Leu-Gly. N-terminal acetylation protects proteins from ubiquitination and degradation by the N-end rule pathway. Necessary for the lysosomal localization and function of ARL8B sugeesting that ARL8B is a NatC substrate. This Mus musculus (Mouse) protein is N-alpha-acetyltransferase 30 (Naa30).